We begin with the raw amino-acid sequence, 344 residues long: Anthranilate phosphoribosyltransferase (344 aa).

Residues Gly-84, 87–88 (GD), Ser-92, 94–97 (NIST), 112–120 (KHGNRSASG), and Ser-124 each bind 5-phospho-alpha-D-ribose 1-diphosphate. Anthranilate is bound at residue Gly-84. Mg(2+) is bound at residue Ser-96. Residue Asn-115 coordinates anthranilate. Arg-170 is an anthranilate binding site. Mg(2+) is bound by residues Asp-229 and Glu-230.

It belongs to the anthranilate phosphoribosyltransferase family. In terms of assembly, homodimer. Mg(2+) serves as cofactor.

It catalyses the reaction N-(5-phospho-beta-D-ribosyl)anthranilate + diphosphate = 5-phospho-alpha-D-ribose 1-diphosphate + anthranilate. It functions in the pathway amino-acid biosynthesis; L-tryptophan biosynthesis; L-tryptophan from chorismate: step 2/5. Catalyzes the transfer of the phosphoribosyl group of 5-phosphorylribose-1-pyrophosphate (PRPP) to anthranilate to yield N-(5'-phosphoribosyl)-anthranilate (PRA). The protein is Anthranilate phosphoribosyltransferase of Synechococcus sp. (strain RCC307).